A 328-amino-acid chain; its full sequence is Nickel import system permease protein NikB (328 aa).

A run of 6 helical transmembrane segments spans residues 11-31, 104-124, 139-159, 170-190, 229-249, and 279-299; these read LMQMIVVLFVISTLTFILMKL, LLISFSTLVVSLCISIPLGII, VISTLSISLPAFFIGIILLFI, ILSQFILPVITLSLGMCAYII, ILPIIPLLGISLGSLIGGTVV, and VLFIGFFVVIINTIADLLTLL. Residues 100-297 form the ABC transmembrane type-1 domain; the sequence is APITLLISFS…IINTIADLLT (198 aa).

Belongs to the binding-protein-dependent transport system permease family. OppBC subfamily. In terms of assembly, the complex is composed of two ATP-binding proteins (NikD and NikE), two transmembrane proteins (NikB and NikC) and a solute-binding protein (NikA).

The protein resides in the cell membrane. Part of the ABC transporter complex NikABCDE (Opp2) involved in nickel import. Probably responsible for the translocation of the substrate across the membrane. The chain is Nickel import system permease protein NikB from Staphylococcus aureus (strain Mu50 / ATCC 700699).